Here is a 151-residue protein sequence, read N- to C-terminus: MTQVEVKILDDRIGQSIPLPEYATQGSAGMDLRACLDQPLTIEPGQTQLIGTGIAMYIGDPNYAATILPRSGLGHKHGLVLGNLVGLIDSDYQGELKVSCWNRSNQAYTIEPGDRIAQLVILPVVQAQMSIVEEFHETDRGEGGFGHSGRS.

Residues 70 to 72 (RSG), Asn-83, 87 to 89 (LID), and Lys-97 each bind substrate.

It belongs to the dUTPase family. Mg(2+) serves as cofactor.

The enzyme catalyses dUTP + H2O = dUMP + diphosphate + H(+). It participates in pyrimidine metabolism; dUMP biosynthesis; dUMP from dCTP (dUTP route): step 2/2. Its function is as follows. This enzyme is involved in nucleotide metabolism: it produces dUMP, the immediate precursor of thymidine nucleotides and it decreases the intracellular concentration of dUTP so that uracil cannot be incorporated into DNA. This is Deoxyuridine 5'-triphosphate nucleotidohydrolase from Idiomarina loihiensis (strain ATCC BAA-735 / DSM 15497 / L2-TR).